A 54-amino-acid chain; its full sequence is Sec-independent protein translocase protein TatA (54 aa).

A helical transmembrane segment spans residues Met1–Ala21.

This sequence belongs to the TatA/E family. In terms of assembly, the Tat system comprises two distinct complexes: a TatABC complex, containing multiple copies of TatA, TatB and TatC subunits, and a separate TatA complex, containing only TatA subunits. Substrates initially bind to the TatABC complex, which probably triggers association of the separate TatA complex to form the active translocon.

Its subcellular location is the cell inner membrane. In terms of biological role, part of the twin-arginine translocation (Tat) system that transports large folded proteins containing a characteristic twin-arginine motif in their signal peptide across membranes. TatA could form the protein-conducting channel of the Tat system. This chain is Sec-independent protein translocase protein TatA, found in Rickettsia prowazekii (strain Madrid E).